The sequence spans 338 residues: Putative clathrin assembly protein At5g10410 (338 aa).

An ENTH domain is found at phenylalanine 27–proline 157.

It localises to the membrane. Its subcellular location is the clathrin-coated pit. The protein resides in the golgi apparatus. The protein localises to the cytoplasmic vesicle. It is found in the clathrin-coated vesicle. The sequence is that of Putative clathrin assembly protein At5g10410 from Arabidopsis thaliana (Mouse-ear cress).